A 59-amino-acid chain; its full sequence is Putative zinc finger protein ORF59a (59 aa).

The segment at 11 to 33 adopts a C2H2-type; degenerate zinc-finger fold; sequence YQCLRCGLTFRTKKQLIRHLVNT.

In Acidianus hospitalis (AFV-1), this protein is Putative zinc finger protein ORF59a.